The chain runs to 1214 residues: Neuronal cell adhesion molecule (1214 aa).

The signal sequence occupies residues 1–29 (MQLKTMPKKKPLSAGRAPLFLFLCQMISA). The Extracellular segment spans residues 30 to 1077 (LDVPLDPKLL…ASRQVDIATQ (1048 aa)). Ig-like C2-type domains follow at residues 46–134 (PTIT…AAVS) and 141–235 (PSRS…QPIS). Disulfide bonds link C68/C123 and C167/C218. N-linked (GlcNAc...) asparagine glycosylation occurs at N83. N-linked (GlcNAc...) asparagine glycosylation is found at N223, N245, N251, N276, N314, and N377. 4 Ig-like C2-type domains span residues 267 to 356 (PPTF…ISVT), 361 to 448 (PYWI…AFVN), 454 to 541 (PRIL…VHLE), and 545 to 626 (PTRF…DSVS). A disulfide bond links C292 and C340. A disulfide bond links C382 and C432. N433 and N507 each carry an N-linked (GlcNAc...) asparagine glycan. 2 disulfides stabilise this stretch: C476-C525 and C567-C616. N-linked (GlcNAc...) asparagine glycans are attached at residues N619, N716, N802, N858, N993, N1009, and N1019. 4 Fibronectin type-III domains span residues 649–744 (PPFD…TKAA), 746–843 (PDQN…SGED), 848–950 (APGN…TPEG), and 954–1051 (APSS…VDEG). Residues 1078-1100 (GWFIGLMCAVALLILILLIVCFI) traverse the membrane as a helical segment. Topologically, residues 1101-1214 (RRNKGGKYPV…SPVNAMNSFV (114 aa)) are cytoplasmic. The segment covering 1109-1129 (PVKEKEDAHADPEIQPMKEDD) has biased composition (basic and acidic residues). The disordered stretch occupies residues 1109–1214 (PVKEKEDAHA…SPVNAMNSFV (106 aa)). Residue T1131 is modified to Phosphothreonine. Y1135 carries the phosphotyrosine modification. S1136 bears the Phosphoserine mark. Basic and acidic residues predominate over residues 1151 to 1160 (PSDRTVKKED). S1161, S1164, S1181, S1200, S1201, and S1205 each carry phosphoserine. Over residues 1198 to 1214 (NESSEAPSPVNAMNSFV) the composition is skewed to polar residues.

This sequence belongs to the immunoglobulin superfamily. L1/neurofascin/NgCAM family. As to quaternary structure, constituent of a NFASC/NRCAM/ankyrin-G complex. Detected in a complex with CNTN1 and PTPRB. Interacts with MYOC. Interacts with GLDN. As to expression, detected in cerebellum Purkinje cells. Detected on nodes of Ranvier and unmyelinated axons in sciatic nerve (at protein level).

The protein resides in the cell membrane. The protein localises to the cell projection. It is found in the axon. Its subcellular location is the secreted. Functionally, cell adhesion protein that is required for normal responses to cell-cell contacts in brain and in the peripheral nervous system. Plays a role in neurite outgrowth in response to contactin binding. Plays a role in mediating cell-cell contacts between Schwann cells and axons. Plays a role in the formation and maintenance of the nodes of Ranvier on myelinated axons. Nodes of Ranvier contain clustered sodium channels that are crucial for the saltatory propagation of action potentials along myelinated axons. During development, nodes of Ranvier are formed by the fusion of two heminodes. Required for normal clustering of sodium channels at heminodes; not required for the formation of mature nodes with normal sodium channel clusters. Required, together with GLDN, for maintaining NFASC and sodium channel clusters at mature nodes of Ranvier. The protein is Neuronal cell adhesion molecule (Nrcam) of Rattus norvegicus (Rat).